A 443-amino-acid chain; its full sequence is tRNA modification GTPase MnmE (443 aa).

3 residues coordinate (6S)-5-formyl-5,6,7,8-tetrahydrofolate: Arg19, Glu78, and Lys118. Positions 214-366 constitute a TrmE-type G domain; the sequence is GFKIAIIGPT…LISKIKNKLK (153 aa). Asn224 serves as a coordination point for K(+). GTP-binding positions include 224 to 229, 243 to 249, and 268 to 271; these read NAGKSS, SEIAGTT, and DTAG. Ser228 contributes to the Mg(2+) binding site. Ser243, Ile245, and Thr248 together coordinate K(+). Thr249 contributes to the Mg(2+) binding site. Residue Lys443 participates in (6S)-5-formyl-5,6,7,8-tetrahydrofolate binding.

This sequence belongs to the TRAFAC class TrmE-Era-EngA-EngB-Septin-like GTPase superfamily. TrmE GTPase family. Homodimer. Heterotetramer of two MnmE and two MnmG subunits. Requires K(+) as cofactor.

Its subcellular location is the cytoplasm. Functionally, exhibits a very high intrinsic GTPase hydrolysis rate. Involved in the addition of a carboxymethylaminomethyl (cmnm) group at the wobble position (U34) of certain tRNAs, forming tRNA-cmnm(5)s(2)U34. This Pelagibacter ubique (strain HTCC1062) protein is tRNA modification GTPase MnmE.